Here is a 552-residue protein sequence, read N- to C-terminus: Urocanate hydratase (552 aa).

NAD(+) is bound by residues 49-50 (GG), Q127, 173-175 (GMG), D193, 239-240 (NA), 260-264 (QTSAH), 270-271 (YI), and Y319. C407 is a catalytic residue. An NAD(+)-binding site is contributed by G489.

This sequence belongs to the urocanase family. It depends on NAD(+) as a cofactor.

It is found in the cytoplasm. The catalysed reaction is 4-imidazolone-5-propanoate = trans-urocanate + H2O. It functions in the pathway amino-acid degradation; L-histidine degradation into L-glutamate; N-formimidoyl-L-glutamate from L-histidine: step 2/3. Catalyzes the conversion of urocanate to 4-imidazolone-5-propionate. The protein is Urocanate hydratase of Bacillus thuringiensis (strain Al Hakam).